Here is a 111-residue protein sequence, read N- to C-terminus: MKIINIGSERALEVIKAPQISEKATFLAEKVRQIIFYVSRDANKAEIKSAIEQIWKSQNIKVKSVQIINVKGKKKRFGRYIGQKSDWKKAFVSLKDDREIDFTDVRLFEDK.

This sequence belongs to the universal ribosomal protein uL23 family. In terms of assembly, part of the 50S ribosomal subunit. Contacts protein L29, and trigger factor when it is bound to the ribosome.

One of the early assembly proteins it binds 23S rRNA. One of the proteins that surrounds the polypeptide exit tunnel on the outside of the ribosome. Forms the main docking site for trigger factor binding to the ribosome. The polypeptide is Large ribosomal subunit protein uL23 (Nitrosomonas eutropha (strain DSM 101675 / C91 / Nm57)).